The following is a 982-amino-acid chain: E3 ubiquitin-protein ligase CBL-B (982 aa).

A 4H region spans residues 35-167 (PPKQAAADRR…KAIFPNGQFQ (133 aa)). One can recognise a Cbl-PTB domain in the interval 35-343 (PPKQAAADRR…GRSYNPDLTG (309 aa)). Residues 168–240 (GDNFRITKAD…FEFDIFTRLF (73 aa)) are EF-hand-like. Residues aspartate 221, threonine 223, asparagine 225, tyrosine 227, and glutamate 232 each contribute to the Ca(2+) site. Positions 241-343 (QPWGSILRNW…GRSYNPDLTG (103 aa)) are SH2-like. Serine 282 carries the phosphoserine; by PKC/PRKCQ modification. Arginine 286 contributes to the 4-O-phospho-L-tyrosine binding site. A linker region spans residues 344–372 (LCEPTPHDHIKVTQEQYELYCEMGSTFQL). The residue at position 363 (tyrosine 363) is a Phosphotyrosine. An RING-type zinc finger spans residues 373–412 (CKICAENDKDVKIEPCGHLMCTSCLTAWQESDGQGCPFCR). Residues 466–571 (NVRKCTDRQN…PPPIPPDNRL (106 aa)) form a disordered region. Polar residues predominate over residues 473 to 486 (RQNSPVTSPGSSPL). Serine 476, serine 480, serine 484, serine 521, serine 525, and serine 529 each carry phosphoserine. Residues 543 to 568 (PLPAPPPPLRDPPPPPPERPPPIPPD) form an interaction with VAV1 region. Residues 544–567 (LPAPPPPLRDPPPPPPERPPPIPP) are compositionally biased toward pro residues. At serine 634 the chain carries Phosphoserine. Tyrosine 665 and tyrosine 709 each carry phosphotyrosine. Disordered regions lie at residues 688–731 (GPLA…NVKP) and 769–929 (FDSA…EAAL). The span at 715 to 725 (HPVSLNSQPSH) shows a compositional bias: polar residues. The span at 819–828 (PSLPPPPPPA) shows a compositional bias: pro residues. Over residues 838–848 (PPGSSSRPSSG) the composition is skewed to low complexity. Polar residues predominate over residues 880–899 (VKTNRTSQDYDQLPSCSDGS). Position 889 is a phosphotyrosine (tyrosine 889). An interaction with SH3KBP1 region spans residues 891–927 (QLPSCSDGSQAPARPPKPRPRRTAPEIHHRKPHGPEA). Over residues 906–922 (PKPRPRRTAPEIHHRKP) the composition is skewed to basic residues. A UBA domain is found at 931-970 (NVDAKIAKLMGEGYAFEEVKRALEIAQNNVEVARSILREF).

Interacts with SH3 domain-containing proteins LCK, CRK and SORBS1. Interacts with LCP2 and ZAP70. Interacts with CBL. Interacts with SH3 domain-containing proteins VAV1, FYN, FGR, PLCG1, GRB2, CRKL, PIK3R1 and SH3KBP1/CIN85. Identified in heterotrimeric complexes with SH3KBP1/CIN85, CD2AP and ARHGEF7, where one CBLB peptide binds two copies of the other protein. Interacts with poly-ubiquitinated proteins. Dimerization is required for the binding of poly-ubiquitin, but not for the binding of mono-ubiquitin. Interacts with EGFR (phosphorylated). Interacts with IFT20. In terms of processing, phosphorylated on tyrosine and serine residues upon TCR or BCR activation, and upon various types of cell stimulation. Post-translationally, auto-ubiquitinated upon EGF-mediated cell activation or upon T-cell costimulation by CD28; which promotes proteasomal degradation. Expressed in placenta, heart, lung, kidney, spleen, ovary and testis, as well as fetal brain and liver and hematopoietic cell lines, but not in adult brain, liver, pancreas, salivary gland, or skeletal muscle. Present in lymphocytes (at protein level).

It is found in the cytoplasm. It carries out the reaction S-ubiquitinyl-[E2 ubiquitin-conjugating enzyme]-L-cysteine + [acceptor protein]-L-lysine = [E2 ubiquitin-conjugating enzyme]-L-cysteine + N(6)-ubiquitinyl-[acceptor protein]-L-lysine.. It participates in protein modification; protein ubiquitination. E3 ubiquitin-protein ligase which accepts ubiquitin from specific E2 ubiquitin-conjugating enzymes, and transfers it to substrates, generally promoting their degradation by the proteasome. Negatively regulates TCR (T-cell receptor), BCR (B-cell receptor) and FCER1 (high affinity immunoglobulin epsilon receptor) signal transduction pathways. In naive T-cells, inhibits VAV1 activation upon TCR engagement and imposes a requirement for CD28 costimulation for proliferation and IL-2 production. Also acts by promoting PIK3R1/p85 ubiquitination, which impairs its recruitment to the TCR and subsequent activation. In activated T-cells, inhibits PLCG1 activation and calcium mobilization upon restimulation and promotes anergy. In B-cells, acts by ubiquitinating SYK and promoting its proteasomal degradation. Slightly promotes SRC ubiquitination. May be involved in EGFR ubiquitination and internalization. May be functionally coupled with the E2 ubiquitin-protein ligase UB2D3. In association with CBL, required for proper feedback inhibition of ciliary platelet-derived growth factor receptor-alpha (PDGFRA) signaling pathway via ubiquitination and internalization of PDGFRA. This chain is E3 ubiquitin-protein ligase CBL-B (CBLB), found in Homo sapiens (Human).